The sequence spans 529 residues: Nuclear protein localization protein 4 homolog 1 (529 aa).

The 138-residue stretch at 129–266 (IQIENQELVN…ITEYSMDRHY (138 aa)) folds into the MPN domain. The segment at 499–529 (SGGAVWNCGHCTFQNEAARQDCSMCGLPAAD) adopts a RanBP2-type zinc-finger fold.

This sequence belongs to the NPL4 family. In terms of assembly, forms a complex composed of ubxn-3, ufd-1, npl-4.1 and cdc-48.1; within the complex, interacts with ufd-1 and ubxn-3. Interacts with ufd-1. Interacts with elc-1/elongin C; the interaction may mediate the interaction between the npl-4-ufd-1-cdc-48 complex and the E3 ubiquitin ligase cul-2 complex.

The protein localises to the cytoplasm. It localises to the nucleus. Its function is as follows. In association with ufd-1 and ATPase cdc-48.1 and/or cdc-48.2, involved in the cytoplasmic elimination of misfolded proteins exported from the ER. This pathway, known as ERAD, prevents the activation of the unfolded protein response (UPR) caused by the accumulation of misfolded proteins in the ER. During S phase and in association with ufd-1, cdc-48.1 and/or cdc-48.2 and ubxn-3, ensures the degradation of DNA licensing factor cdt-1 after the initiation of DNA replication and thus the disassembly of the DNA replication CGM helicase complex by promoting the dissociation from chromatin of several of its components including cdc-45 and sld-5. Regulates ubxn-3 nuclear localization during S phase. This chain is Nuclear protein localization protein 4 homolog 1, found in Caenorhabditis elegans.